Consider the following 711-residue polypeptide: Triacylglycerol hydrolase DDHD2 (711 aa).

Positions 1–24 are disordered; the sequence is MSSVQSQQEQLSQSDPSPSPNSCS. The WWE domain occupies 30–112; the sequence is DMDAGSLYEP…WDELASEVRR (83 aa). Ser351 serves as the catalytic Nucleophile. The region spanning 385 to 448 is the SAM domain; sequence GDTPTLEEDL…NYFSTRKNSM (64 aa). A Phosphoserine modification is found at Ser447. Disordered stretches follow at residues 449 to 470 and 609 to 638; these read GIKR…SEFC and LQAS…EETS. A DDHD domain is found at 495-700; that stretch reads LIYKPEIFFA…VLLVLKEIYQ (206 aa). Over residues 614–624 the composition is skewed to acidic residues; the sequence is TPEETEAEPES.

It belongs to the PA-PLA1 family. In terms of assembly, forms homooligomers and, to a much smaller extent, heterooligomers with DDHD1. In terms of tissue distribution, widely expressed (at protein level).

It is found in the cytoplasm. Its subcellular location is the cytosol. It localises to the endoplasmic reticulum-Golgi intermediate compartment. The protein localises to the golgi apparatus. The protein resides in the cis-Golgi network. It carries out the reaction a triacylglycerol + H2O = a diacylglycerol + a fatty acid + H(+). The enzyme catalyses a diacylglycerol + H2O = a monoacylglycerol + a fatty acid + H(+). It catalyses the reaction a 1,3-diacylglycerol + H2O = a 1-acylglycerol + a fatty acid + H(+). The catalysed reaction is a 1-acylglycerol + H2O = glycerol + a fatty acid + H(+). It carries out the reaction 1,2,3-tri-(9Z-octadecenoyl)-glycerol + H2O = di-(9Z)-octadecenoylglycerol + (9Z)-octadecenoate + H(+). The enzyme catalyses di-(9Z)-octadecenoylglycerol + H2O = (9Z-octadecenoyl)-glycerol + (9Z)-octadecenoate + H(+). It catalyses the reaction 1,3-di-(9Z-octadecenoyl)-glycerol + H2O = 1-(9Z-octadecenoyl)-glycerol + (9Z)-octadecenoate + H(+). The catalysed reaction is trihexadecanoylglycerol + H2O = dihexadecanoylglycerol + hexadecanoate + H(+). It carries out the reaction 1,2-di-(9Z-octadecenoyl)-sn-glycero-3-phosphocholine + H2O = (9Z-octadecenoyl)-sn-glycero-3-phosphocholine + (9Z)-octadecenoate + H(+). The enzyme catalyses 1-(9Z-octadecenoyl)-glycerol + H2O = glycerol + (9Z)-octadecenoate + H(+). It catalyses the reaction 1,2-di-(9Z-octadecenoyl)-sn-glycero-3-phosphate + H2O = 2-(9Z-octadecenoyl)-sn-glycero-3-phosphate + (9Z)-octadecenoate + H(+). The catalysed reaction is 1-hexadecanoyl-2-(9Z-octadecenoyl)-sn-glycero-3-phosphate + H2O = 2-(9Z-octadecenoyl)-sn-glycero-3-phosphate + hexadecanoate + H(+). It carries out the reaction 1-hexadecanoyl-2-(9Z-octadecenoyl)-sn-glycero-3-phosphoethanolamine + H2O = 2-(9Z-octadecenoyl)-sn-glycero-3-phosphoethanolamine + hexadecanoate + H(+). The enzyme catalyses 1-hexadecanoyl-2-(9Z-octadecenoyl)-sn-glycero-3-phospho-L-serine + H2O = 2-(9Z-octadecenoyl)-sn-glycero-3-phospho-L-serine + hexadecanoate + H(+). It catalyses the reaction 1-hexadecanoyl-2-(9Z-octadecenoyl)-sn-glycero-3-phosphocholine + H2O = 2-(9Z-octadecenoyl)-sn-glycero-3-phosphocholine + hexadecanoate + H(+). Functionally, diacylglycerol (DAG) and triacylglycerol (TAG) lipase required for proper lipid homeostasis in the central nervous system. It cooperates with PNPLA2/ATGL in neuronal TAG catabolism and hydrolyzes sn-1,3 DAG downstream of PNPLA2/ATGL. In vitro, it also acts as a phospholipase that hydrolyzes preferentially phosphatidic acids, including 1,2-dioleoyl-sn-phosphatidic acid, phosphatidylcholine and phosphatidylethanolamine. Specifically binds to phosphatidylinositol 3-phosphate (PI(3)P), phosphatidylinositol 4-phosphate (PI(4)P), phosphatidylinositol 5-phosphate (PI(5)P) and possibly phosphatidylinositol 4,5-bisphosphate (PI(4,5)P2). May be involved in the maintenance of the endoplasmic reticulum and/or Golgi structures. May regulate the transport between Golgi apparatus and plasma membrane. This chain is Triacylglycerol hydrolase DDHD2, found in Homo sapiens (Human).